Reading from the N-terminus, the 447-residue chain is Hemopexin (447 aa).

Positions 1 to 18 (MRLIQALSLCLALSLSLA) are cleaved as a signal peptide. The disordered stretch occupies residues 20 to 44 (PPQHKEDHSHKGKPGGEGHKHELHH). Over residues 22 to 44 (QHKEDHSHKGKPGGEGHKHELHH) the composition is skewed to basic and acidic residues. 8 Hemopexin repeats span residues 53–93 (GIEF…FPEL), 99–151 (LGHV…FPGI), 152–197 (PDHL…FKSM), 198–243 (PNCT…FMRC), 262–304 (RVHL…FKEL), 305–351 (HSEV…VLGI), 352–395 (EGPV…TITQ), and 396–441 (FKRI…VSQQ). An N-linked (GlcNAc...) asparagine glycan is attached at Asn87. N-linked (GlcNAc...) asparagine glycosylation is found at Asn168 and Asn199. His293 is a binding site for heme.

It belongs to the hemopexin family.

It localises to the secreted. In terms of biological role, binds heme and transports it to the liver for breakdown and iron recovery, after which the free hemopexin returns to the circulation. The protein is Hemopexin of Danio rerio (Zebrafish).